The following is a 231-amino-acid chain: dTTP/UTP pyrophosphatase (231 aa).

Residue Asp81 is the Proton acceptor of the active site.

It belongs to the Maf family. YhdE subfamily. A divalent metal cation is required as a cofactor.

It is found in the cytoplasm. The enzyme catalyses dTTP + H2O = dTMP + diphosphate + H(+). It catalyses the reaction UTP + H2O = UMP + diphosphate + H(+). Functionally, nucleoside triphosphate pyrophosphatase that hydrolyzes dTTP and UTP. May have a dual role in cell division arrest and in preventing the incorporation of modified nucleotides into cellular nucleic acids. This Lawsonia intracellularis (strain PHE/MN1-00) protein is dTTP/UTP pyrophosphatase.